The sequence spans 122 residues: Basic phospholipase A2 homolog Gln49-PLA2 (122 aa).

7 disulfide bridges follow: cysteine 26-cysteine 115, cysteine 28-cysteine 44, cysteine 43-cysteine 95, cysteine 49-cysteine 122, cysteine 50-cysteine 88, cysteine 57-cysteine 81, and cysteine 75-cysteine 86.

Belongs to the phospholipase A2 family. Group II subfamily. Q49 sub-subfamily. Monomer. As to expression, expressed by the venom gland.

It is found in the secreted. In terms of biological role, snake venom phospholipase A2 (PLA2) homolog that shows local myotoxicity, apparent anticoagulant activity, and neurotoxicity. Shows analgesic effect on mice due to a decrease of action potentials and nerve conduction velocity. These effects are caused by inhibition of voltage-gated ion channels (potassium (Kv) and sodium (Nav)). In addition, analgesic effects are antagonized by naloxone, implying the mechanism of action is correlated with opioid receptors (probably indirectly). Does not show detectable PLA2 activity on egg yolk phospholipids. This is Basic phospholipase A2 homolog Gln49-PLA2 from Gloydius ussuriensis (Ussuri mamushi).